We begin with the raw amino-acid sequence, 125 residues long: DNA-directed RNA polymerase subunit omega (125 aa).

This sequence belongs to the RNA polymerase subunit omega family. As to quaternary structure, the RNAP catalytic core consists of 2 alpha, 1 beta, 1 beta' and 1 omega subunit. When a sigma factor is associated with the core the holoenzyme is formed, which can initiate transcription.

The enzyme catalyses RNA(n) + a ribonucleoside 5'-triphosphate = RNA(n+1) + diphosphate. In terms of biological role, promotes RNA polymerase assembly. Latches the N- and C-terminal regions of the beta' subunit thereby facilitating its interaction with the beta and alpha subunits. This Zymomonas mobilis subsp. mobilis (strain ATCC 31821 / ZM4 / CP4) protein is DNA-directed RNA polymerase subunit omega.